A 198-amino-acid chain; its full sequence is MSLNIHVIKDKILSENWFVLRNMTYELTRADGSVVRHKREVYDRGNGATVLLYNRHKQTVVLVRQFRVATWVNGNHDGMLIETCAGLLDNDEPEACIRKEAVEETGYEVGEVRKLFELFMSPGGVTEVVHFFIAEYSDAQRTTSGGGVDDEAIEVLELPFSQALQMVADGEIRDGKAVILLQYLQTSGLMSGNSDKSD.

GDP-alpha-D-mannose-binding positions include 38 to 40 (KRE), Arg-67, and 85 to 87 (AGL). Residues 43–180 (DRGNGATVLL…EIRDGKAVIL (138 aa)) form the Nudix hydrolase domain. Mg(2+) is bound by residues Ala-85, Glu-100, and Glu-104. The Nudix box motif lies at 86-106 (GLLDNDEPEACIRKEAVEETG). GDP-alpha-D-mannose-binding positions include Glu-104, Glu-127, 150–151 (DE), and Lys-176. Glu-151 contacts Mg(2+).

Belongs to the Nudix hydrolase family. NudK subfamily. As to quaternary structure, homodimer. It depends on Mg(2+) as a cofactor.

It carries out the reaction GDP-alpha-D-mannose + H2O = alpha-D-mannose 1-phosphate + GMP + 2 H(+). Its function is as follows. Nucleoside diphosphate sugar hydrolase that hydrolyzes GDP-mannose as its preferred substrate, yielding GMP and mannose-1-phosphate. This Klebsiella pneumoniae subsp. pneumoniae (strain ATCC 700721 / MGH 78578) protein is GDP-mannose pyrophosphatase (nudK).